The chain runs to 428 residues: Serine hydroxymethyltransferase (428 aa).

Residues Leu127 and 131–133 each bind (6S)-5,6,7,8-tetrahydrofolate; that span reads GHL. Lys236 is subject to N6-(pyridoxal phosphate)lysine.

It belongs to the SHMT family. As to quaternary structure, homodimer. Pyridoxal 5'-phosphate serves as cofactor.

It is found in the cytoplasm. It carries out the reaction (6R)-5,10-methylene-5,6,7,8-tetrahydrofolate + glycine + H2O = (6S)-5,6,7,8-tetrahydrofolate + L-serine. It functions in the pathway one-carbon metabolism; tetrahydrofolate interconversion. It participates in amino-acid biosynthesis; glycine biosynthesis; glycine from L-serine: step 1/1. In terms of biological role, catalyzes the reversible interconversion of serine and glycine with tetrahydrofolate (THF) serving as the one-carbon carrier. This reaction serves as the major source of one-carbon groups required for the biosynthesis of purines, thymidylate, methionine, and other important biomolecules. Also exhibits THF-independent aldolase activity toward beta-hydroxyamino acids, producing glycine and aldehydes, via a retro-aldol mechanism. The sequence is that of Serine hydroxymethyltransferase from Tropheryma whipplei (strain TW08/27) (Whipple's bacillus).